The primary structure comprises 680 residues: DNA-directed RNA polymerase subunit beta' (680 aa).

Residues Cys-69, Cys-71, Cys-87, and Cys-90 each contribute to the Zn(2+) site. 3 residues coordinate Mg(2+): Asp-489, Asp-491, and Asp-493.

This sequence belongs to the RNA polymerase beta' chain family. RpoC1 subfamily. In plastids the minimal PEP RNA polymerase catalytic core is composed of four subunits: alpha, beta, beta', and beta''. When a (nuclear-encoded) sigma factor is associated with the core the holoenzyme is formed, which can initiate transcription. Requires Mg(2+) as cofactor. The cofactor is Zn(2+).

It localises to the plastid. It is found in the chloroplast. It catalyses the reaction RNA(n) + a ribonucleoside 5'-triphosphate = RNA(n+1) + diphosphate. Functionally, DNA-dependent RNA polymerase catalyzes the transcription of DNA into RNA using the four ribonucleoside triphosphates as substrates. The sequence is that of DNA-directed RNA polymerase subunit beta' from Manihot esculenta (Cassava).